The primary structure comprises 841 residues: Putative helicase R592 (841 aa).

The region spanning 72–309 is the Helicase ATP-binding domain; sequence STFVIETNSA…RRYVNKIFGQ (238 aa). 85–92 serves as a coordination point for ATP; sequence DKVGAGKT. Positions 195–205 are enriched in basic residues; it reads KLPVKTTKKGG. A disordered region spans residues 195–215; it reads KLPVKTTKKGGSKTQNKAQND. A compositionally biased stretch (polar residues) spans 206 to 215; that stretch reads SKTQNKAQND. The DEAD box motif lies at 266 to 269; it reads DEMD. A coiled-coil region spans residues 413 to 450; sequence QDVDAHENRKKNIMNNIARCKTKLESIKEKINSIKDEC. The RING-type; degenerate zinc finger occupies 451–491; the sequence is CFICTDPFENPTIMNCCKSIFCLKCLLTTLKTVGSKCPYCR. The region spanning 531-682 is the Helicase C-terminal domain; the sequence is VLEQVLSYIS…WMITNPTDLN (152 aa). Positions 678-841 are disordered; it reads PTDLNEEPDE…KAPVRKLIKV (164 aa). The span at 681–697 shows a compositional bias: acidic residues; it reads LNEEPDEESDEGSDEDV. Residues 698 to 725 are compositionally biased toward basic and acidic residues; that stretch reads EKSKDKKSSDKKSSDKKKSEKKSSDKKS. Residues 726 to 749 show a composition bias toward basic residues; it reads SNKKNSKKKTYVKPKSSKKTSQKV. Composition is skewed to acidic residues over residues 765–774 and 782–804; these read DSDDLDDSDD and SDSDDFGNLSDSDDLSDSDESEI. Basic residues-rich tracts occupy residues 809 to 821 and 828 to 841; these read KSKKTSKSSKKNK and TLKKKAPVRKLIKV.

The protein is Putative helicase R592 of Acanthamoeba polyphaga mimivirus (APMV).